Reading from the N-terminus, the 954-residue chain is Glycine dehydrogenase (decarboxylating) (954 aa).

An N6-(pyridoxal phosphate)lysine modification is found at Lys-699.

Belongs to the GcvP family. The glycine cleavage system is composed of four proteins: P, T, L and H. The cofactor is pyridoxal 5'-phosphate.

The enzyme catalyses N(6)-[(R)-lipoyl]-L-lysyl-[glycine-cleavage complex H protein] + glycine + H(+) = N(6)-[(R)-S(8)-aminomethyldihydrolipoyl]-L-lysyl-[glycine-cleavage complex H protein] + CO2. Functionally, the glycine cleavage system catalyzes the degradation of glycine. The P protein binds the alpha-amino group of glycine through its pyridoxal phosphate cofactor; CO(2) is released and the remaining methylamine moiety is then transferred to the lipoamide cofactor of the H protein. This is Glycine dehydrogenase (decarboxylating) from Nitrobacter winogradskyi (strain ATCC 25391 / DSM 10237 / CIP 104748 / NCIMB 11846 / Nb-255).